Here is a 333-residue protein sequence, read N- to C-terminus: 5-formaminoimidazole-4-carboxamide-1-(beta)-D-ribofuranosyl 5'-monophosphate synthetase (333 aa).

His-21 and Ser-84 together coordinate 5-amino-1-(5-phospho-beta-D-ribosyl)imidazole-4-carboxamide. Residues 118–313 enclose the ATP-grasp domain; it reads MELLAAAGIP…YFDEPMDMGE (196 aa). Residues 141-187 and Glu-209 each bind ATP; that span reads PVIV…VPAY. Asn-229 provides a ligand contact to 5-amino-1-(5-phospho-beta-D-ribosyl)imidazole-4-carboxamide. Mg(2+) is bound by residues Glu-268 and Glu-281.

This sequence belongs to the phosphohexose mutase family. It depends on Mg(2+) as a cofactor. Mn(2+) serves as cofactor.

It catalyses the reaction 5-amino-1-(5-phospho-beta-D-ribosyl)imidazole-4-carboxamide + formate + ATP = 5-formamido-1-(5-phospho-D-ribosyl)imidazole-4-carboxamide + ADP + phosphate. The protein operates within purine metabolism; IMP biosynthesis via de novo pathway; 5-formamido-1-(5-phospho-D-ribosyl)imidazole-4-carboxamide from 5-amino-1-(5-phospho-D-ribosyl)imidazole-4-carboxamide (formate route): step 1/1. In terms of biological role, catalyzes the ATP- and formate-dependent formylation of 5-aminoimidazole-4-carboxamide-1-beta-d-ribofuranosyl 5'-monophosphate (AICAR) to 5-formaminoimidazole-4-carboxamide-1-beta-d-ribofuranosyl 5'-monophosphate (FAICAR) in the absence of folates. This chain is 5-formaminoimidazole-4-carboxamide-1-(beta)-D-ribofuranosyl 5'-monophosphate synthetase, found in Pyrobaculum calidifontis (strain DSM 21063 / JCM 11548 / VA1).